The sequence spans 637 residues: Poly [ADP-ribose] polymerase 2 (637 aa).

The DNA-binding element occupies 1 to 140; the sequence is MANKLKVDEL…KKEEKIVTAT (140 aa). An SAP 1 domain is found at 2 to 36; the sequence is ANKLKVDELRLKLAERGLSTTGVKAVLVERLEEAI. The segment covering 35–46 has biased composition (basic and acidic residues); sequence AIAEDTKKEESK. The tract at residues 35–56 is disordered; it reads AIAEDTKKEESKSKRKRNSSND. Residues 41–62 carry the Nuclear localization signal motif; the sequence is KKEESKSKRKRNSSNDTYESNK. An SAP 2 domain is found at 69 to 103; it reads FRGMIVKELREEAIKRGLDTTGTKKDLLERLCNDA. Over residues 106-117 the composition is skewed to polar residues; sequence VSNAPVKSSNGT. A disordered region spans residues 106–134; that stretch reads VSNAPVKSSNGTDEAEDDNNGFEEEKKEE. A compositionally biased stretch (acidic residues) spans 118–127; it reads DEAEDDNNGF. Residues 158 to 255 enclose the WGR domain; sequence QYHVLQRGDD…KEFIPHPKSY (98 aa). One can recognise a PARP alpha-helical domain in the interval 286 to 404; it reads QSKLDTRVAK…EIELATKLLS (119 aa). The region spanning 412-637 is the PARP catalytic domain; sequence DPLYYHYQQL…VIQVKFNYKH (226 aa).

This sequence belongs to the ARTD/PARP family.

It is found in the nucleus. The catalysed reaction is NAD(+) + (ADP-D-ribosyl)n-acceptor = nicotinamide + (ADP-D-ribosyl)n+1-acceptor + H(+).. It carries out the reaction L-aspartyl-[protein] + NAD(+) = 4-O-(ADP-D-ribosyl)-L-aspartyl-[protein] + nicotinamide. It catalyses the reaction L-glutamyl-[protein] + NAD(+) = 5-O-(ADP-D-ribosyl)-L-glutamyl-[protein] + nicotinamide. In terms of biological role, involved in the base excision repair (BER) pathway, by catalyzing the poly(ADP-ribosyl)ation of a limited number of acceptor proteins involved in chromatin architecture and in DNA metabolism. This modification follows DNA damages and appears as an obligatory step in a detection/signaling pathway leading to the reparation of DNA strand breaks. This is Poly [ADP-ribose] polymerase 2 (PARP2) from Arabidopsis thaliana (Mouse-ear cress).